The sequence spans 187 residues: Cytochrome b-245 chaperone 1 (187 aa).

Residues 20–42 (GIRSWSLLVGILSIGLAAAYYSG) form a helical membrane-spanning segment. At serine 168 the chain carries Phosphoserine.

This sequence belongs to the CYBC1 family. As to quaternary structure, interacts with CYBB; CYBC1 may act as a chaperone stabilizing Cytochrome b-245 heterodimer. In terms of tissue distribution, highly expressed in macrophages, neutrophils and monocytes.

The protein localises to the endoplasmic reticulum membrane. Its function is as follows. Functions as a chaperone necessary for a stable expression of the CYBA and CYBB subunits of the cytochrome b-245 heterodimer. Controls the phagocyte respiratory burst and is essential for innate immunity. The sequence is that of Cytochrome b-245 chaperone 1 from Homo sapiens (Human).